Consider the following 237-residue polypeptide: MTPQDFYRTLEEDGFSLSSKQKEQFDTYFKLLVEWNTKINLTAITEENEVYLKHFYDSIAPILQGFLANEPIKLLDIGAGAGFPSLPMKILFPNLEVTIIDSLNKRISFLTLLAQELGLENVHFFHGRAEDFGQDKAFRGQFDVVTARAVARMQVLSELTIPFLKIGGKLIALKAQAADQELEEAKNALCLLFGKVIKNHSYQLPNGDSRFITIVEKKKETPNKYPRKAGLPNKKPL.

S-adenosyl-L-methionine contacts are provided by residues glycine 78, phenylalanine 83, 129 to 130 (AE), and arginine 148.

The protein belongs to the methyltransferase superfamily. RNA methyltransferase RsmG family.

It localises to the cytoplasm. Specifically methylates the N7 position of a guanine in 16S rRNA. The chain is Ribosomal RNA small subunit methyltransferase G from Streptococcus pyogenes serotype M3 (strain ATCC BAA-595 / MGAS315).